The primary structure comprises 382 residues: Na(+)/H(+) antiporter NhaA 1 (382 aa).

The next 11 helical transmembrane spans lie at 10–30, 45–65, 87–107, 116–136, 145–165, 170–190, 211–231, 252–272, 275–295, 326–346, and 353–373; these read EFSI…NISP, FSFH…IAAA, LLAT…LNAL, GWGI…SLVF, FLLL…ALFY, LPAA…AALL, AGLF…VPFL, LASF…LFGL, AGVT…SLVI, LVGL…GEAF, and GAAK…LAAG.

The protein belongs to the NhaA Na(+)/H(+) (TC 2.A.33) antiporter family.

It is found in the cell inner membrane. It carries out the reaction Na(+)(in) + 2 H(+)(out) = Na(+)(out) + 2 H(+)(in). Functionally, na(+)/H(+) antiporter that extrudes sodium in exchange for external protons. This chain is Na(+)/H(+) antiporter NhaA 1, found in Pelobacter propionicus (strain DSM 2379 / NBRC 103807 / OttBd1).